Here is a 324-residue protein sequence, read N- to C-terminus: Protein SRC2 homolog (324 aa).

Residues methionine 1–lysine 111 form the C2 domain. At methionine 1–lysine 279 the chain is on the cytoplasmic side. Positions glycine 141–glycine 281 are disordered. Low complexity-rich tracts occupy residues tyrosine 166 to alanine 175 and proline 246 to glycine 269. A compositionally biased stretch (basic residues) spans lysine 270 to lysine 279. Residues alanine 280–valine 300 form a helical; Signal-anchor membrane-spanning segment. The Lumenal segment spans residues glycine 301–phenylalanine 324.

As to quaternary structure, interacts with RBOHF (via N-terminus).

It is found in the endoplasmic reticulum membrane. The protein localises to the protein storage vacuole membrane. It localises to the cell membrane. In terms of biological role, may act as an activator of the calcium-dependent activation of RBOHF that mediates reactive oxygen species (ROS) production and may play a role in cold responses. The protein is Protein SRC2 homolog of Arabidopsis thaliana (Mouse-ear cress).